Reading from the N-terminus, the 962-residue chain is Splicing regulator ARVCF (962 aa).

The stretch at 8-46 (SAASILASVKEQEARFERLTRALEQERRHVALQLERAQQ) forms a coiled coil. Positions 95-122 (TVEEDPGTPTSHVSIVTSEDGTTRRTET) are disordered. A phosphothreonine mark is found at threonine 102 and threonine 104. Residues 102–114 (TPTSHVSIVTSED) show a composition bias toward polar residues. Residue arginine 170 is modified to Omega-N-methylarginine. Disordered stretches follow at residues 186-253 (GGGF…LPER) and 266-290 (RSLAADDEGGPELEPDYGTATRRRP). Over residues 206–217 (RGLGMRPPRAGP) the composition is skewed to low complexity. Serine 267 is modified (phosphoserine). The span at 270–280 (ADDEGGPELEP) shows a compositional bias: acidic residues. Serine 332, serine 335, serine 343, and serine 345 each carry phosphoserine. ARM repeat units lie at residues 348–387 (SARKEPRWRDPELPEVLAMLRHPVDPVKANAAAYLQHLCF), 390–429 (EGVKRRVRQLRGLPLLVALLDHPRAEVRRRACGALRNLSY), 433–467 (TDNKAAIRDCGGVPALVRLLRAARDNEVRELVTGT), 468–508 (LWNL…NEDS), 526–565 (LRNVSSDGAEARRRLRECEGLVDALLHALQSAVGRKDTDN), and 575–622 (MRNL…GKKA). The segment at 590 to 614 (DRYQEAEPGPLGSAVGSQRRRRDDA) is disordered. Serine 606 carries the phosphoserine modification. A Nuclear localization signal motif is present at residues 607 to 623 (QRRRRDDASCFGGKKAK). Threonine 642 bears the Phosphothreonine mark. 4 ARM repeats span residues 646-686 (PKRT…AAGA), 699-738 (TYIRATVRKERGLPVLVELLQSETDKVVRAVAIALRNLSL), 739-781 (DRRN…AVLN), and 782-826 (TIHE…SHVL). A required for interaction with RNA-binding proteins DDX5, HNRNPH2 and SRSF1 and with mRNAs region spans residues 776–962 (VVAVLNTIHE…AKPQPVDSWV (187 aa)). The interval 854 to 962 (ATAKGPKGAL…AKPQPVDSWV (109 aa)) is disordered. Residues serine 864 and serine 871 each carry the phosphoserine modification. Threonine 872 carries the post-translational modification Phosphothreonine. Positions 878-887 (KSLEGEKTGS) are enriched in basic and acidic residues. Serine 915 is modified (phosphoserine). Positions 920 to 932 (ASEKEPLKLDPSR) are enriched in basic and acidic residues.

The protein belongs to the beta-catenin family. In terms of assembly, component of a ribonucleoprotein complex containing mRNAs and RNA-binding proteins including DDX5, HNRNPH2 and SRSF1 as well as ARVCF. Interacts (via the extreme C-terminus) with FRMPD2 (via the PDZ 2 domain). Interacts with CCDC85B. In terms of tissue distribution, found in all the examined tissues including heart, brain, liver and kidney. Found at low level in lung. Expressed in dermal connective tissue, salivary gland duct and in the corneal layer (at protein level). Expressed in arrector pili muscle (at protein level). High levels detected in epithelial cells with lower levels found in fibroblasts and T lymphocytes.

The protein resides in the cell junction. It localises to the adherens junction. It is found in the nucleus. The protein localises to the cytoplasm. Contributes to the regulation of alternative splicing of pre-mRNAs. The polypeptide is Splicing regulator ARVCF (Homo sapiens (Human)).